The following is a 305-amino-acid chain: tRNA pseudouridine synthase B (305 aa).

Asp39 acts as the Nucleophile in catalysis.

The protein belongs to the pseudouridine synthase TruB family. Type 1 subfamily.

The enzyme catalyses uridine(55) in tRNA = pseudouridine(55) in tRNA. Functionally, responsible for synthesis of pseudouridine from uracil-55 in the psi GC loop of transfer RNAs. This is tRNA pseudouridine synthase B from Staphylococcus aureus (strain MW2).